A 70-amino-acid chain; its full sequence is uncharacterized protein (70 aa).

It to M.pneumoniae MPN377.

This is an uncharacterized protein from Ureaplasma parvum serovar 3 (strain ATCC 700970).